We begin with the raw amino-acid sequence, 150 residues long: Allograft inflammatory factor 1-like (150 aa).

Serine 2 is modified (N-acetylserine). Serine 2 carries the post-translational modification Phosphoserine. Residues 47-82 (EKLAAFKEKYMEFDLNNEGEIDLMSLKRMMEKLGVP) enclose the EF-hand 1 domain. Residues aspartate 60, asparagine 62, glutamate 64, and glutamate 66 each coordinate Ca(2+). The EF-hand 2; degenerate domain occupies 83-117 (KTHLEMKKMISEVTGGVSDTISYRDFVNMMLGKRS). A disordered region spans residues 129-150 (KANESSPKPAGPPPERDIASLP). Serine 134 carries the phosphoserine modification.

In terms of assembly, homodimer (Potential). Monomer.

The protein resides in the cytoplasm. It is found in the cytoskeleton. Its subcellular location is the cell projection. It localises to the ruffle membrane. Functionally, actin-binding protein that promotes actin bundling. May neither bind calcium nor depend on calcium for function. This chain is Allograft inflammatory factor 1-like (Aif1l), found in Mus musculus (Mouse).